Here is a 230-residue protein sequence, read N- to C-terminus: Probable nicotinate-nucleotide adenylyltransferase (230 aa).

Belongs to the NadD family.

It catalyses the reaction nicotinate beta-D-ribonucleotide + ATP + H(+) = deamido-NAD(+) + diphosphate. The protein operates within cofactor biosynthesis; NAD(+) biosynthesis; deamido-NAD(+) from nicotinate D-ribonucleotide: step 1/1. In terms of biological role, catalyzes the reversible adenylation of nicotinate mononucleotide (NaMN) to nicotinic acid adenine dinucleotide (NaAD). The chain is Probable nicotinate-nucleotide adenylyltransferase from Pseudomonas putida (strain ATCC 47054 / DSM 6125 / CFBP 8728 / NCIMB 11950 / KT2440).